A 529-amino-acid polypeptide reads, in one-letter code: Ribonuclease Y (529 aa).

The helical transmembrane segment at 4-24 (GLIYISLEVLVACLITALVMY) threads the bilayer. The 82-residue stretch at 216–297 (LTTRIALPCS…NRIEEVYHRV (82 aa)) folds into the KH domain. The region spanning 342–435 (ALQHSKEVAL…VCAADALSAG (94 aa)) is the HD domain.

The protein belongs to the RNase Y family.

It is found in the cell membrane. Its function is as follows. Endoribonuclease that initiates mRNA decay. This is Ribonuclease Y from Helicobacter pylori (strain ATCC 700392 / 26695) (Campylobacter pylori).